We begin with the raw amino-acid sequence, 637 residues long: 1-deoxy-D-xylulose-5-phosphate synthase (637 aa).

Residues His-72 and Gly-113–Ala-115 each bind thiamine diphosphate. Position 144 (Asp-144) interacts with Mg(2+). Thiamine diphosphate-binding positions include Gly-145 to Ala-146, Asn-174, Tyr-287, and Glu-370. A Mg(2+)-binding site is contributed by Asn-174.

The protein belongs to the transketolase family. DXPS subfamily. As to quaternary structure, homodimer. Mg(2+) serves as cofactor. Thiamine diphosphate is required as a cofactor.

The catalysed reaction is D-glyceraldehyde 3-phosphate + pyruvate + H(+) = 1-deoxy-D-xylulose 5-phosphate + CO2. It participates in metabolic intermediate biosynthesis; 1-deoxy-D-xylulose 5-phosphate biosynthesis; 1-deoxy-D-xylulose 5-phosphate from D-glyceraldehyde 3-phosphate and pyruvate: step 1/1. Its function is as follows. Catalyzes the acyloin condensation reaction between C atoms 2 and 3 of pyruvate and glyceraldehyde 3-phosphate to yield 1-deoxy-D-xylulose-5-phosphate (DXP). In Prochlorococcus marinus subsp. pastoris (strain CCMP1986 / NIES-2087 / MED4), this protein is 1-deoxy-D-xylulose-5-phosphate synthase.